The primary structure comprises 383 residues: Probable cytosolic iron-sulfur protein assembly protein 1 (383 aa).

WD repeat units follow at residues 10-49, 56-108, 135-175, 182-221, 228-275, 302-341, and 349-383; these read AHND…KFPL, THKR…VEYD, GHEN…EEFE, DHSQ…DEWS, GHEG…EDDE, VHKY…KWVI, and HGVH…LWKI.

This sequence belongs to the WD repeat CIA1 family. As to quaternary structure, interacts with NAR1.

The protein resides in the cytoplasm. It is found in the nucleus. Functionally, essential component of the cytosolic iron-sulfur (Fe/S) protein assembly machinery. Required for the maturation of extramitochondrial Fe/S proteins. The polypeptide is Probable cytosolic iron-sulfur protein assembly protein 1 (Candida albicans (strain SC5314 / ATCC MYA-2876) (Yeast)).